A 1012-amino-acid polypeptide reads, in one-letter code: Multiple C2 domain and transmembrane region protein 10 (1012 aa).

A C2 1 domain is found at 1-115 (MTEAKTGTGN…REGESVVQLY (115 aa)). Residues 141–203 (ENGENVRRVN…SQQNGQGQRM (63 aa)) are disordered. Residues 148–160 (RVNRSGGSKKSKK) are compositionally biased toward basic residues. Composition is skewed to low complexity over residues 161 to 180 (VQNV…QQQQ) and 188 to 202 (RGNQ…QGQR). C2 domains lie at 262–376 (SSHK…PQWY), 411–551 (KAGN…SRWF), and 585–710 (YNSD…THSY). Ca(2+) is bound by residues glutamate 296, glutamate 344, asparagine 346, and glutamate 349. The next 3 helical transmembrane spans lie at 810–830 (FFRL…VEVM), 841–861 (VFVL…PCLL), and 952–972 (ATFL…TVPV).

This sequence belongs to the MCTP family. Ca(2+) serves as cofactor. In terms of tissue distribution, highly expressed in roots meristems, shoot apical meristems (SAMs) and in incipient leaf primordia. Observed in flowers.

It localises to the endoplasmic reticulum membrane. In terms of biological role, may function as a signaling molecule by regulating the trafficking of other regulators. In Arabidopsis thaliana (Mouse-ear cress), this protein is Multiple C2 domain and transmembrane region protein 10.